A 550-amino-acid chain; its full sequence is Chaperonin GroEL (550 aa).

ATP is bound by residues 30–33 (TLGP), Lys-51, 87–91 (DGTTT), Gly-415, and Asp-496.

The protein belongs to the chaperonin (HSP60) family. Forms a cylinder of 14 subunits composed of two heptameric rings stacked back-to-back. Interacts with the co-chaperonin GroES.

It is found in the cytoplasm. The catalysed reaction is ATP + H2O + a folded polypeptide = ADP + phosphate + an unfolded polypeptide.. Functionally, together with its co-chaperonin GroES, plays an essential role in assisting protein folding. The GroEL-GroES system forms a nano-cage that allows encapsulation of the non-native substrate proteins and provides a physical environment optimized to promote and accelerate protein folding. This is Chaperonin GroEL from Rickettsia typhi (strain ATCC VR-144 / Wilmington).